We begin with the raw amino-acid sequence, 286 residues long: Bifunctional protein FolD (286 aa).

NADP(+) is bound by residues Gly-165–Ser-167 and Ser-190.

This sequence belongs to the tetrahydrofolate dehydrogenase/cyclohydrolase family. As to quaternary structure, homodimer.

The catalysed reaction is (6R)-5,10-methylene-5,6,7,8-tetrahydrofolate + NADP(+) = (6R)-5,10-methenyltetrahydrofolate + NADPH. It catalyses the reaction (6R)-5,10-methenyltetrahydrofolate + H2O = (6R)-10-formyltetrahydrofolate + H(+). It functions in the pathway one-carbon metabolism; tetrahydrofolate interconversion. Its function is as follows. Catalyzes the oxidation of 5,10-methylenetetrahydrofolate to 5,10-methenyltetrahydrofolate and then the hydrolysis of 5,10-methenyltetrahydrofolate to 10-formyltetrahydrofolate. The sequence is that of Bifunctional protein FolD from Staphylococcus epidermidis (strain ATCC 12228 / FDA PCI 1200).